Here is a 713-residue protein sequence, read N- to C-terminus: Undecaprenyl-diphosphooligosaccharide--protein glycotransferase (713 aa).

The Cytoplasmic portion of the chain corresponds to 1–11 (MLKKEYLKNPY). Residues 12–35 (LVLFAMIVLAYVFSVFCRFYWVWW) form a helical membrane-spanning segment. Topologically, residues 36 to 96 (ASEFNEYFFN…YWLYKITPFS (61 aa)) are periplasmic. The DXD motif 1 motif lies at 52 to 54 (SND). Aspartate 54 serves as a coordination point for Mn(2+). Residues 97 to 122 (FESIILYMSTFLSSLVVIPIILLANE) form a helical membrane-spanning segment. Topologically, residues 123–125 (YKR) are cytoplasmic. Residues 126–144 (PLMGFVAALLASVANSYYN) traverse the membrane as a helical segment. Residues 145–152 (RTMSGYYD) lie on the Periplasmic side of the membrane. Aspartate 152 lines the Mn(2+) pocket. A DXD motif 2 motif is present at residues 152 to 154 (DTD). Residues 153–174 (TDMLVIVLPMFILFFMVRMILK) traverse the membrane as a helical segment. Over 175 to 176 (KD) the chain is Cytoplasmic. A helical membrane pass occupies residues 177-192 (FFSLIALPLFIGIYLW). Over 193–197 (WYPSS) the chain is Periplasmic. 194–196 (YPS) is a binding site for [alpha-D-GalNAc-(1-&gt;4)]2-[beta-D-Glc-(1-&gt;3)]-[alpha-D-GalNAc-(1-&gt;4)]2-alpha-D-GalNAc-(1-&gt;3)-alpha-D-diNAcBac-tri-trans,hepta-cis-undecaprenyl diphosphate. A helical transmembrane segment spans residues 198 to 215 (YTLNVALIGLFLIYTLIF). Topologically, residues 216–220 (HRKEK) are cytoplasmic. Residues 221 to 233 (IFYIAVILSSLTL) traverse the membrane as a helical segment. Residues 234 to 237 (SNIA) are Periplasmic-facing. Residues 238-254 (WFYQSAIIVILFALFAL) form a helical membrane-spanning segment. Residues 255–260 (EQKRLN) are Cytoplasmic-facing. Residues 261-278 (FMIIGILGSATLIFLILS) traverse the membrane as a helical segment. Over 279-324 (GGVDPILYQLKFYIFRSDESANLTQGFMYFNVNQTIQEVENVDFSE) the chain is Periplasmic. Residue tyrosine 291 participates in [alpha-D-GalNAc-(1-&gt;4)]2-[beta-D-Glc-(1-&gt;3)]-[alpha-D-GalNAc-(1-&gt;4)]2-alpha-D-GalNAc-(1-&gt;3)-alpha-D-diNAcBac-tri-trans,hepta-cis-undecaprenyl diphosphate binding. A TIXE motif motif is present at residues 313 to 316 (TIQE). Glutamate 316 is a Mn(2+) binding site. A helical transmembrane segment spans residues 325–347 (FMRRISGSEIVFLFSLFGFVWLL). The Cytoplasmic portion of the chain corresponds to 348–352 (RKHKS). A helical transmembrane segment spans residues 353-369 (MIMALPILVLGFLALKG). The Periplasmic segment spans residues 370 to 373 (GLRF). A [alpha-D-GalNAc-(1-&gt;4)]2-[beta-D-Glc-(1-&gt;3)]-[alpha-D-GalNAc-(1-&gt;4)]2-alpha-D-GalNAc-(1-&gt;3)-alpha-D-diNAcBac-tri-trans,hepta-cis-undecaprenyl diphosphate-binding site is contributed by arginine 372. The chain crosses the membrane as a helical span at residues 374–396 (TIYSVPVMALGFGFLLSEFKAIL). At 397-406 (VKKYSQLTSN) the chain is on the cytoplasmic side. The helical transmembrane segment at 407 to 427 (VCIVFATILTLAPVFIHIYNY) threads the bilayer. Over 428–713 (KAPTVFSQNE…RDAKVFKLKI (286 aa)) the chain is Periplasmic. The tract at residues 457–459 (WWD) is interacts with target acceptor peptide in protein substrate. Residues 457-461 (WWDYG) carry the WWDYG motif motif. Tyrosine 462 provides a ligand contact to [alpha-D-GalNAc-(1-&gt;4)]2-[beta-D-Glc-(1-&gt;3)]-[alpha-D-GalNAc-(1-&gt;4)]2-alpha-D-GalNAc-(1-&gt;3)-alpha-D-diNAcBac-tri-trans,hepta-cis-undecaprenyl diphosphate. N-linked (DATDGlc) asparagine glycosylation is present at asparagine 534. The MI motif signature appears at 568–575 (MSLIFSTV).

It belongs to the STT3 family. Mg(2+) serves as cofactor. Requires Mn(2+) as cofactor.

It localises to the cell inner membrane. The catalysed reaction is tritrans,heptacis-undecaprenyl diphosphooligosaccharide + [protein]-L-asparagine = tritrans,heptacis-undecaprenyl diphosphate + a glycoprotein with the oligosaccharide chain attached by N-beta-D-glycosyl linkage to protein L-asparagine.. It functions in the pathway protein modification; protein glycosylation. Functionally, oligosaccharyl transferase (OST) that catalyzes the initial transfer of a defined glycan (GalNAc(2)GlcGalNAc(3)Bac(NAc)(2) in eubacteria, where Bac(NAc)(2) is di-N-acetyl bacillosamine) from the lipid carrier undecaprenol-pyrophosphate to an asparagine residue within an Asp/Glu-Asn-X-Ser/Thr consensus motif in nascent polypeptide chains, the first step in protein N-glycosylation. In Campylobacter jejuni subsp. jejuni serotype O:2 (strain ATCC 700819 / NCTC 11168), this protein is Undecaprenyl-diphosphooligosaccharide--protein glycotransferase (pglB).